Reading from the N-terminus, the 532-residue chain is Copalyl diphosphate synthase (532 aa).

A DXDDTA motif motif is present at residues Asp313–Ala318. The QXXDGSW motif signature appears at Gln443 to Trp449.

It belongs to the terpene synthase family. Mg(2+) is required as a cofactor.

The catalysed reaction is (2E,6E,10E)-geranylgeranyl diphosphate = (+)-copalyl diphosphate. Involved in the biosynthesis of the mercapturic acid derivative diterpene cyslabdan A, a potentiator of the beta-lactam antibiotic imipenem. Catalyzes the conversion of geranylgeranyl diphosphate (GGDP) into (+)-copalyl diphosphate. This chain is Copalyl diphosphate synthase, found in Streptomyces cyslabdanicus.